The primary structure comprises 122 residues: Phospholipase A2 homolog ECS_00014 (122 aa).

Cystine bridges form between Cys26/Cys115, Cys28/Cys44, Cys43/Cys95, Cys49/Cys122, Cys50/Cys88, Cys57/Cys81, and Cys75/Cys86. Positions 105 to 117 are important for membrane-damaging activities in eukaryotes and bacteria; heparin-binding; the sequence is KKYTYYPNFWCKG.

The protein belongs to the phospholipase A2 family. Group II subfamily. S49 sub-subfamily. Monomer. As to expression, expressed by the venom gland.

The protein localises to the secreted. Its function is as follows. Snake venom phospholipase A2 homolog that lacks enzymatic activity. Shows high myotoxin activities and displays edema-inducing activities. Has cytotoxic activities against HUVEC cells (LC(50)=12.2 uL) and human lung adenocarcinoma A549 cells (LC(50)=8.5 uL). This is Phospholipase A2 homolog ECS_00014 from Echis carinatus sochureki (Saw-scaled viper).